The following is a 263-amino-acid chain: Ubiquitin domain-containing protein 7SL RNA2 (263 aa).

In terms of domain architecture, Ubiquitin-like 1 spans 1-53 (MNVDIDTETGSSFSITIDFGETVLQIKEKIEKSQGIPVSKQILYLDGKALEDD). The interval 74–93 (ADPNQSNEQTEQSKQIDDKK) is disordered. Over residues 76-86 (PNQSNEQTEQS) the composition is skewed to polar residues. A Ubiquitin-like 2 domain is found at 184 to 263 (FTVHVKPYQE…GDTIELIREK (80 aa)).

Belongs to the ubiquitin family. Expressed in seedlings, roots, stems, rosettes and flowers (at protein level).

It localises to the nucleus. Functionally, controls phase transition from the vegetative to the reproductive state. Involved in the maintenance of the shoot apical meristem (SAM) thus preventing inflorescence meristem (IM) formation and subsequent inflorescence stem development during flowering. Regulates leaf and organ morphology. In Arabidopsis thaliana (Mouse-ear cress), this protein is Ubiquitin domain-containing protein 7SL RNA2.